A 116-amino-acid polypeptide reads, in one-letter code: Ribosome-binding factor A (116 aa).

This sequence belongs to the RbfA family. As to quaternary structure, monomer. Binds 30S ribosomal subunits, but not 50S ribosomal subunits or 70S ribosomes.

It is found in the cytoplasm. Functionally, one of several proteins that assist in the late maturation steps of the functional core of the 30S ribosomal subunit. Associates with free 30S ribosomal subunits (but not with 30S subunits that are part of 70S ribosomes or polysomes). Required for efficient processing of 16S rRNA. May interact with the 5'-terminal helix region of 16S rRNA. This is Ribosome-binding factor A from Streptococcus pneumoniae serotype 4 (strain ATCC BAA-334 / TIGR4).